A 508-amino-acid polypeptide reads, in one-letter code: Aspartic proteinase yapsin-3 (508 aa).

Positions 1-20 (MKLQLAAVATLAVLTSPAFG) are cleaved as a signal peptide. Positions 21 to 47 (RVLPDGKYVKIPFTKKKNGDNGELSKR) are excised as a propeptide. A Peptidase A1 domain is found at 63–394 (YSVELAIGTP…DLDNYEISLA (332 aa)). A glycan (N-linked (GlcNAc...) asparagine) is linked at asparagine 75. Residue aspartate 81 is part of the active site. 4 N-linked (GlcNAc...) asparagine glycosylation sites follow: asparagine 120, asparagine 160, asparagine 163, and asparagine 275. Aspartate 288 is an active-site residue. N-linked (GlcNAc...) asparagine glycans are attached at residues asparagine 309, asparagine 328, asparagine 367, asparagine 422, asparagine 445, and asparagine 462. Residues 448–468 (STATTTRSTTTKKTNSTTTAK) are compositionally biased toward low complexity. A disordered region spans residues 448-476 (STATTTRSTTTKKTNSTTTAKSTHKSKRA). Asparagine 483 is lipidated: GPI-anchor amidated asparagine. Residues 484–508 (SASSIRSTLGLLLVPSLLILSVFFS) constitute a propeptide, removed in mature form.

This sequence belongs to the peptidase A1 family. In terms of processing, can also be processed to start at Phe-54.

Its subcellular location is the cell membrane. Cleaves proteins C-terminally to mono- and paired-basic residues. Required for cell wall integrity. This Saccharomyces cerevisiae (strain ATCC 204508 / S288c) (Baker's yeast) protein is Aspartic proteinase yapsin-3 (YPS3).